Consider the following 403-residue polypeptide: MTEVLKTNVLQSNENIVQYYTQKIQDAELAILQKTQNLRRLEAQRNGLNARVRLLREEIQLLQEPGSYVGEVIKTMGKNKVLVKVHPEGKYVVDISPDIDIKEIKPNIRVALRNDSYQLIKILPNKVDPLVSLMMVEKIPDSTYEMVGGLEKQIKEIKEVIELPVKHPELFESLGIPQPKGILLYGPPGTGKTLLARAVAHHTDCKFIRVSGSELVQKYIGEGSRMVRELFVMAREHAPSIIFMDEIDSIGSSRSDSSGGSGDSEVQRTMLELLNQLDGFEATKNIKVIMATNRIDILDPALLRPGRIDRKIEFPPPSAEARAEILRIHSRSMNLTRGIDLKSIAEKMNGASGAELKGVCTEAGMFALRERRVHVTQEDFELAVAKVLNKGDSGEMSLQKLFK.

186 to 193 is an ATP binding site; the sequence is GPPGTGKT.

It belongs to the AAA ATPase family.

It localises to the cytoplasm. Its subcellular location is the nucleus. Its function is as follows. The 26S proteasome is involved in the ATP-dependent degradation of ubiquitinated proteins. The regulatory (or ATPase) complex confers ATP dependency and substrate specificity to the 26S complex. The sequence is that of 26S proteasome regulatory subunit 8 homolog (let1) from Schizosaccharomyces pombe (strain 972 / ATCC 24843) (Fission yeast).